Here is a 264-residue protein sequence, read N- to C-terminus: Glutamate racemase (264 aa).

Residues 10–11 (DS) and 42–43 (YG) contribute to the substrate site. C73 acts as the Proton donor/acceptor in catalysis. 74–75 (NT) provides a ligand contact to substrate. C183 acts as the Proton donor/acceptor in catalysis. Residue 184-185 (TH) participates in substrate binding.

This sequence belongs to the aspartate/glutamate racemases family.

It carries out the reaction L-glutamate = D-glutamate. It functions in the pathway cell wall biogenesis; peptidoglycan biosynthesis. In terms of biological role, provides the (R)-glutamate required for cell wall biosynthesis. The polypeptide is Glutamate racemase (Streptococcus mutans serotype c (strain ATCC 700610 / UA159)).